We begin with the raw amino-acid sequence, 833 residues long: Heat shock transcription factor (833 aa).

Residue Met-1 is modified to N-acetylmethionine. Positions Met-1–Ser-16 are enriched in polar residues. Disordered regions lie at residues Met-1–Asp-31 and Asn-62–Leu-92. Residues Ser-69 to Phe-80 are compositionally biased toward low complexity. A Phosphothreonine modification is found at Thr-97. Residues Pro-150 to Gln-161 show a composition bias toward polar residues. 2 disordered regions span residues Pro-150–Lys-170 and Gly-277–Asn-309. Residues Lys-170–Glu-259 mediate DNA binding. The tract at residues Asn-260 to Asn-280 is flexible linker. Residues Gly-277–Asn-296 show a composition bias toward low complexity. Residues Glu-350–Ile-403 are involved in trimerization. A compositionally biased stretch (basic and acidic residues) spans Ser-447 to Asn-457. Residues Ser-447–Ile-493 are disordered. Phosphoserine is present on residues Ser-450, Ser-458, Ser-471, Ser-478, and Ser-528. Residues Ser-458–Thr-487 are compositionally biased toward polar residues. Residues Arg-542–Leu-554 show a composition bias toward polar residues. 3 disordered regions span residues Arg-542–Ser-626, Gly-657–Pro-765, and Ser-778–Asn-799. The segment covering Pro-571–Thr-580 has biased composition (acidic residues). Over residues Arg-588 to Asp-600 the composition is skewed to polar residues. Residues Asp-610–Ser-626 show a composition bias toward basic and acidic residues. Residues Asn-660–Asn-675 are compositionally biased toward low complexity. Residues Met-676–Phe-687 are compositionally biased toward polar residues. Residues Ser-697–Ser-713 show a composition bias toward low complexity. Composition is skewed to polar residues over residues Ala-727–Gly-739, Asn-752–Val-763, and Ser-778–Asp-794.

This sequence belongs to the HSF family. In terms of assembly, homotrimer. Homotrimerization increases the affinity of HSF1 to DNA. Exhibits temperature-dependent phosphorylation that activates the transcriptional capacity.

The protein localises to the nucleus. DNA-binding transcription factor that specifically binds heat shock promoter elements (HSE) and activates transcription. The polypeptide is Heat shock transcription factor (Saccharomyces cerevisiae (strain ATCC 204508 / S288c) (Baker's yeast)).